The chain runs to 584 residues: Sodium/calcium exchanger NCL1 (584 aa).

The next 5 helical transmembrane spans lie at 77 to 97, 120 to 140, 154 to 174, 215 to 235, and 245 to 265; these read FLPCTTTVLGNLFLVLAYGFL, LVGGLLLPILGALPDALLVLV, VLIGMGLLAGSTVFLLTLLWG, AARIMGISVIPFIIAQFPKML, and VLLALIVSFSLVLAYCLYQVF. EF-hand domains lie at 305–340 and 345–380; these read PNEDVIKKLFHKIDMDESQTLSRAELHALIIGINFE and DKNDAVDKIMDDFDTSGNDIVEEAEFVSGMKRWLNE. The Ca(2+) site is built by D318, D320, S322, T324, E329, D358, S360, N362, and E369. Helical transmembrane passes span 426–446, 466–486, 504–524, 531–551, and 561–581; these read WCITKAVGLLLLGSAIAAAFA, FISFIALPLATNSSEAVSAII, YGGVTMNNTLCLGVFLALIYI, FSSEVLIILLVCVIMGLFTSF, and LVAYMLYPLSLVVVYILDFVF.

This sequence belongs to the Ca(2+):cation antiporter (CaCA) (TC 2.A.19) family.

It is found in the cell membrane. In terms of biological role, may function as a sodium/calcium exchanger (NCX) and participate in the maintenance of calcium homeostasis. May play a role abiotic stress responses. The protein is Sodium/calcium exchanger NCL1 of Oryza sativa subsp. japonica (Rice).